Reading from the N-terminus, the 2763-residue chain is Large tegument protein deneddylase (2763 aa).

A deubiquitination activity region spans residues 1 to 247; it reads MDIIPPIAVT…CDTYFTDEQY (247 aa). One can recognise a Peptidase C76 domain in the interval 12–237; it reads AGVGSRNQFD…SSAVTLIYGS (226 aa). Catalysis depends on residues cysteine 32, aspartate 168, and histidine 170. The interval 495-523 is interaction with inner tegument protein; that stretch reads LELFINLTILRLTGFVVENGTRTHHGATS. Repeat copies occupy residues 2455–2457, 2458–2460, 2461–2463, 2464–2466, 2467–2469, 2470–2472, 2473–2475, and 2476–2478. Residues 2455–2478 are 8 X 3 AA repeats of P-A/V-Q; sequence PVQPVQPAQPVQPAQPAQPVQPAQ. A disordered region spans residues 2630–2651; that stretch reads NYKTRQPSPNFPRDVHTWGVSS.

It belongs to the herpesviridae large tegument protein family. Interacts with host CUL1 and CUL4A; these interactions inhibit the E3 ligase activity of cullins. Interacts with inner tegument protein. Interacts with capsid vertex specific component CVC2. Interacts with the major capsid protein/MCP.

The protein resides in the virion tegument. Its subcellular location is the host cytoplasm. It is found in the host nucleus. It catalyses the reaction Thiol-dependent hydrolysis of ester, thioester, amide, peptide and isopeptide bonds formed by the C-terminal Gly of ubiquitin (a 76-residue protein attached to proteins as an intracellular targeting signal).. In terms of biological role, large tegument protein that plays multiple roles in the viral cycle. During viral entry, remains associated with the capsid while most of the tegument is detached and participates in the capsid transport toward the host nucleus. Plays a role in the routing of the capsid at the nuclear pore complex and subsequent uncoating. Within the host nucleus, acts as a deneddylase and promotes the degradation of nuclear CRLs (cullin-RING ubiquitin ligases) and thereby stabilizes nuclear CRL substrates, while cytoplasmic CRLs remain unaffected. These modifications prevent host cell cycle S-phase progression and create a favorable environment allowing efficient viral genome replication. Participates later in the secondary envelopment of capsids. Indeed, plays a linker role for the association of the outer viral tegument to the capsids together with the inner tegument protein. The sequence is that of Large tegument protein deneddylase from Varicella-zoster virus (strain Oka vaccine) (HHV-3).